Reading from the N-terminus, the 554-residue chain is Valerianol synthase TPS1F (554 aa).

Positions 307 and 311 each coordinate Mg(2+). Residues 326-330 carry the DDXXD motif motif; the sequence is VQRWD. Mg(2+) contacts are provided by aspartate 452, serine 456, and glutamate 460.

This sequence belongs to the terpene synthase family. Mg(2+) serves as cofactor.

It catalyses the reaction (2E,6E)-farnesyl diphosphate + H2O = valerianol + diphosphate. It participates in secondary metabolite biosynthesis; terpenoid biosynthesis. Functionally, terpene synthase that catalyzes the biosynthesis of the terpene valerianol, which is a volatile compound of floral scent. This is Valerianol synthase TPS1F from Camellia hiemalis (Camellia).